The primary structure comprises 189 residues: GMP synthase [glutamine-hydrolyzing] subunit A (189 aa).

The region spanning 1–189 (MIVILNNGGQ…CKKCGFGFEE (189 aa)) is the Glutamine amidotransferase type-1 domain. Residue cysteine 76 is the Nucleophile of the active site. Residues histidine 163 and glutamate 165 contribute to the active site.

Heterodimer composed of a glutamine amidotransferase subunit (A) and a GMP-binding subunit (B).

It catalyses the reaction XMP + L-glutamine + ATP + H2O = GMP + L-glutamate + AMP + diphosphate + 2 H(+). It participates in purine metabolism; GMP biosynthesis; GMP from XMP (L-Gln route): step 1/1. Functionally, catalyzes the synthesis of GMP from XMP. This is GMP synthase [glutamine-hydrolyzing] subunit A from Methanococcus maripaludis (strain DSM 14266 / JCM 13030 / NBRC 101832 / S2 / LL).